We begin with the raw amino-acid sequence, 247 residues long: Ribonuclease 3 (247 aa).

The RNase III domain maps to 5 to 147 (LIALQERLQH…LIGAVYLDAG (143 aa)). A Mg(2+)-binding site is contributed by E40. D44 is a catalytic residue. A disordered region spans residues 104–124 (QRRSRRRCADELQPDEAGSGG). 2 residues coordinate Mg(2+): D133 and E136. The active site involves E136. Residues 174–244 (DAKTALQEWL…AAAMLATLKA (71 aa)) form the DRBM domain.

It belongs to the ribonuclease III family. In terms of assembly, homodimer. Mg(2+) is required as a cofactor.

It is found in the cytoplasm. It carries out the reaction Endonucleolytic cleavage to 5'-phosphomonoester.. In terms of biological role, digests double-stranded RNA. Involved in the processing of primary rRNA transcript to yield the immediate precursors to the large and small rRNAs (23S and 16S). Processes some mRNAs, and tRNAs when they are encoded in the rRNA operon. Processes pre-crRNA and tracrRNA of type II CRISPR loci if present in the organism. The protein is Ribonuclease 3 of Verminephrobacter eiseniae (strain EF01-2).